A 121-amino-acid chain; its full sequence is UPF0102 protein VP0448 (121 aa).

The protein belongs to the UPF0102 family.

This chain is UPF0102 protein VP0448, found in Vibrio parahaemolyticus serotype O3:K6 (strain RIMD 2210633).